The primary structure comprises 363 residues: MKHAPEPAHRHGGAERCAILLVNLGTPDEPSAPALRRYLAEFLSDPRVVEIPRAVWLPILHGVVLRVRPAKSAAKYASIWTAEGSPLKVWTEKQAKLLTGYLGERGHPVLVRAAMRYGQPSVATQLDALKADGATRILVLPLYPQYAAATTASVFDAVYAWAARTRRVPELRFVNHYHDDPGYILALGRCIEDHWMRNGRAERLVLSFHGVPERTLRLGDPYHCECQKTARLLTERLALKPEQVLVTFQSRFGKAKWLEPYTEPTLVQLAQQGIRRVDVACPGFTSDCLETLEEIAQEAREAYLHAGGETFHYIPCLNDRHEWIAALSDIAIRHLQGWPTQTAPDPAALQAQALRARQLGAQA.

Fe cation is bound by residues H209 and E290.

Belongs to the ferrochelatase family.

The protein resides in the cytoplasm. It catalyses the reaction heme b + 2 H(+) = protoporphyrin IX + Fe(2+). The protein operates within porphyrin-containing compound metabolism; protoheme biosynthesis; protoheme from protoporphyrin-IX: step 1/1. Functionally, catalyzes the ferrous insertion into protoporphyrin IX. The sequence is that of Ferrochelatase from Methylibium petroleiphilum (strain ATCC BAA-1232 / LMG 22953 / PM1).